Here is a 125-residue protein sequence, read N- to C-terminus: Fluoride-specific ion channel FluC (125 aa).

The next 4 membrane-spanning stretches (helical) occupy residues 4–24 (WLFVAAGGAIGACLRFGISEL), 35–55 (YGTLVVNVVGSFIMGIAFALI), 69–89 (LMVGILGALTTFSSFALDTVV), and 103–123 (MGLNLSLCLAMVLLGMQLVAS). Positions 75 and 78 each coordinate Na(+).

Belongs to the fluoride channel Fluc/FEX (TC 1.A.43) family.

Its subcellular location is the cell inner membrane. It carries out the reaction fluoride(in) = fluoride(out). Na(+) is not transported, but it plays an essential structural role and its presence is essential for fluoride channel function. In terms of biological role, fluoride-specific ion channel. Important for reducing fluoride concentration in the cell, thus reducing its toxicity. This is Fluoride-specific ion channel FluC from Aeromonas salmonicida (strain A449).